We begin with the raw amino-acid sequence, 76 residues long: UPF0291 protein MW2494 (76 aa).

The protein belongs to the UPF0291 family.

It is found in the cytoplasm. This chain is UPF0291 protein MW2494, found in Staphylococcus aureus (strain MW2).